A 187-amino-acid chain; its full sequence is GTPase KRas (187 aa).

GTP is bound by residues 10 to 18, 29 to 35, 59 to 60, and 116 to 119; these read GAVGVGKSA, VDEYDPT, AG, and NKCA. An Effector region motif is present at residues 32 to 40; it reads YDPTIEDSY. Residues 168-187 form a disordered region; sequence EKMSKDGKKKKKSKTKCSIL. Cys184 carries the post-translational modification Cysteine methyl ester. The S-farnesyl cysteine moiety is linked to residue Cys184. The propeptide at 185-187 is removed in mature form; the sequence is SIL.

This sequence belongs to the small GTPase superfamily. Ras family.

It localises to the cell membrane. Its subcellular location is the cytoplasm. The catalysed reaction is GTP + H2O = GDP + phosphate + H(+). Its activity is regulated as follows. Alternates between an inactive form bound to GDP and an active form bound to GTP. Activated by a guanine nucleotide-exchange factor (GEF) and inactivated by a GTPase-activating protein (GAP). Functionally, ras proteins bind GDP/GTP and possess intrinsic GTPase activity. Plays an important role in the regulation of cell proliferation. This Xenopus laevis (African clawed frog) protein is GTPase KRas (kras).